Consider the following 219-residue polypeptide: MSKQAEEEQLAFLDSGRIIGIINQLKESEDPEKIVTIQIQVNLKGFDPRKDNKVSKDMVLPYRVRSLDKTIVIADEAHVKVCIDANLPYVPIDEISGDDKKDIRESVLKKNKFFILCPGYNKIYQLKNILRCGKTPHILRNGDDINAVFETGKKSCKLRIQDDFSVTSFTVGHTGMDSEHIYENIKVGMGLLVSYLKNGSQNLKGVMIKTDQSPPVTLY.

It belongs to the universal ribosomal protein uL1 family. In terms of assembly, component of the large ribosomal subunit.

The protein localises to the cytoplasm. This Encephalitozoon cuniculi (strain GB-M1) (Microsporidian parasite) protein is Large ribosomal subunit protein uL1 (RPL1).